Here is a 92-residue protein sequence, read N- to C-terminus: Phospholemman (92 aa).

A signal peptide spans 1 to 20 (MAPLHHILVLCVGFLTTATA). Over 21 to 35 (EAPQEHDPFTYDYQS) the chain is Extracellular. The chain crosses the membrane as a helical span at residues 36–56 (LRIGGLIIAGILFILGILIVL). Over 57–92 (SRRCRCKFNQQQRTGEPDEEEGTFRSSIRRLSTRRR) the chain is Cytoplasmic. Residue C60 is the site of S-palmitoyl cysteine attachment. At C62 the chain carries S-glutathionyl cysteine; alternate. C62 carries S-palmitoyl cysteine; alternate lipidation. Residues 65 to 92 (NQQQRTGEPDEEEGTFRSSIRRLSTRRR) are disordered. T79 bears the Phosphothreonine mark. S82 bears the Phosphoserine mark. Phosphoserine; by PKA and PKC occurs at positions 83 and 88. Residues 83–92 (SIRRLSTRRR) show a composition bias toward basic residues. Position 89 is a phosphothreonine; by PKC (T89).

Belongs to the FXYD family. As to quaternary structure, homotetramer. Monomer. Regulatory subunit of the sodium/potassium-transporting ATPase (NKA) which is composed of a catalytic alpha subunit, a non-catalytic beta subunit and an additional regulatory subunit. The monomeric form associates with NKA while the oligomeric form does not. Interacts with the catalytic alpha-1 subunit ATP1A1. Also interacts with the catalytic alpha-2 and alpha-3 subunits ATP1A2 and ATP1A3. Very little interaction with the alpha subunits ATP1A1, ATP1A2 or ATP1A3 when phosphorylated at Ser-83. Interacts with non-catalytic beta-1 subunit ATP1B1. Oxidative stress decreases interaction with ATP1A1 but increases interaction with ATP1B1. In terms of processing, major plasma membrane substrate for cAMP-dependent protein kinase (PKA) and protein kinase C (PKC) in several different tissues. Phosphorylated in response to insulin and adrenergic stimulation. Phosphorylation at Ser-88 stimulates sodium/potassium-transporting ATPase activity while the unphosphorylated form inhibits sodium/potassium-transporting ATPase activity. Phosphorylation increases tetramerization, decreases binding to ATP1A1 and reduces inhibition of ATP1A1 activity. Phosphorylation at Ser-83 leads to greatly reduced interaction with ATP1A1, ATP1A2 and ATP1A3. May be phosphorylated by DMPK. Palmitoylation increases half-life and stability and is enhanced upon phosphorylation at Ser-88 by PKA. In terms of tissue distribution, present in heart, esophagus, stomach, aorta, skeletal muscle, smooth muscle, and liver but absent from brain and kidney.

The protein resides in the cell membrane. The protein localises to the sarcolemma. It is found in the apical cell membrane. It localises to the membrane. Its subcellular location is the caveola. The protein resides in the T-tubule. Associates with and regulates the activity of the sodium/potassium-transporting ATPase (NKA) which transports Na(+) out of the cell and K(+) into the cell. Inhibits NKA activity in its unphosphorylated state and stimulates activity when phosphorylated. Reduces glutathionylation of the NKA beta-1 subunit ATP1B1, thus reversing glutathionylation-mediated inhibition of ATP1B1. Contributes to female sexual development by maintaining the excitability of neurons which secrete gonadotropin-releasing hormone. This Canis lupus familiaris (Dog) protein is Phospholemman.